Consider the following 300-residue polypeptide: Ribonuclease HIII (300 aa).

Residues I83–K300 form the RNase H type-2 domain. The a divalent metal cation site is built by D89, E90, and D194.

Belongs to the RNase HII family. RnhC subfamily. The cofactor is Mn(2+). Mg(2+) serves as cofactor.

It localises to the cytoplasm. The catalysed reaction is Endonucleolytic cleavage to 5'-phosphomonoester.. In terms of biological role, endonuclease that specifically degrades the RNA of RNA-DNA hybrids. The sequence is that of Ribonuclease HIII from Streptococcus pyogenes serotype M5 (strain Manfredo).